We begin with the raw amino-acid sequence, 604 residues long: Netrin-1 (604 aa).

Residues 1 to 24 (MMRAVWEALAALAAVACLVGAVRG) form the signal peptide. The Laminin N-terminal domain occupies 47 to 284 (HPRRCIPDFV…AVSDLQVGGR (238 aa)). 3 N-linked (GlcNAc...) asparagine glycosylation sites follow: asparagine 95, asparagine 116, and asparagine 131. Disulfide bonds link cysteine 119–cysteine 152, cysteine 285–cysteine 294, cysteine 287–cysteine 304, cysteine 306–cysteine 315, cysteine 318–cysteine 338, cysteine 341–cysteine 350, cysteine 343–cysteine 368, cysteine 371–cysteine 380, cysteine 383–cysteine 401, cysteine 404–cysteine 416, cysteine 406–cysteine 423, cysteine 425–cysteine 434, cysteine 437–cysteine 451, cysteine 472–residue 544, and cysteine 491–cysteine 601. Laminin EGF-like domains are found at residues 285 to 340 (CKCN…ECVA), 341 to 403 (CNCN…ACKA), and 404 to 453 (CDCH…PCIK). An N-linked (GlcNAc...) asparagine glycan is attached at asparagine 417. One can recognise an NTR domain in the interval 472–601 (CDSYCKASKG…FQQREKKGKC (130 aa)). The short motif at 530-532 (RGD) is the Cell attachment site element.

In terms of assembly, binds to its receptors; DCC, UNC5A, UNC5B, UNC5C and probably UNC5D. Binds to its receptor; DSCAM. Interacts with APP.

It localises to the secreted. The protein localises to the cytoplasm. Functionally, netrins control guidance of CNS commissural axons and peripheral motor axons. Its association with either DCC or some UNC5 receptors will lead to axon attraction or repulsion, respectively. Binding to UNC5C might cause dissociation of UNC5C from polymerized TUBB3 in microtubules and thereby lead to increased microtubule dynamics and axon repulsion. Involved in dorsal root ganglion axon projection towards the spinal cord. It also serves as a survival factor via its association with its receptors which prevent the initiation of apoptosis. Involved in colorectal tumorigenesis by regulating apoptosis. The protein is Netrin-1 (Ntn1) of Rattus norvegicus (Rat).